The following is a 223-amino-acid chain: Probable cytokinin riboside 5'-monophosphate phosphoribohydrolase LOGL1 (223 aa).

Substrate-binding positions include Glu89, 107–108 (RK), 124–130 (GYGTMEE), and Thr136. The tract at residues 201 to 223 (QEVAPRTSWEMSELGYGKTPEES) is disordered.

Belongs to the LOG family. As to expression, expressed in shoot apex, immature inflorescences and flowers.

It carries out the reaction N(6)-(dimethylallyl)adenosine 5'-phosphate + H2O = N(6)-dimethylallyladenine + D-ribose 5-phosphate. The catalysed reaction is 9-ribosyl-trans-zeatin 5'-phosphate + H2O = trans-zeatin + D-ribose 5-phosphate. In terms of biological role, cytokinin-activating enzyme working in the direct activation pathway. Phosphoribohydrolase that converts inactive cytokinin nucleotides to the biologically active free-base forms. This Oryza sativa subsp. japonica (Rice) protein is Probable cytokinin riboside 5'-monophosphate phosphoribohydrolase LOGL1 (LOGL1).